A 553-amino-acid polypeptide reads, in one-letter code: Glutamate--tRNA ligase (553 aa).

Positions 98-108 match the 'HIGH' region motif; sequence PNPSGPLHIGH.

This sequence belongs to the class-I aminoacyl-tRNA synthetase family. Glutamate--tRNA ligase type 2 subfamily.

It localises to the cytoplasm. The enzyme catalyses tRNA(Glu) + L-glutamate + ATP = L-glutamyl-tRNA(Glu) + AMP + diphosphate. Catalyzes the attachment of glutamate to tRNA(Glu) in a two-step reaction: glutamate is first activated by ATP to form Glu-AMP and then transferred to the acceptor end of tRNA(Glu). This Methanocaldococcus jannaschii (strain ATCC 43067 / DSM 2661 / JAL-1 / JCM 10045 / NBRC 100440) (Methanococcus jannaschii) protein is Glutamate--tRNA ligase.